We begin with the raw amino-acid sequence, 240 residues long: UDP-2,3-diacylglucosamine hydrolase (240 aa).

Mn(2+) is bound by residues Asp-8, His-10, Asp-41, Asn-79, and His-114. 79–80 is a substrate binding site; sequence NR. The substrate site is built by Asp-122, Ser-160, Asn-164, Lys-167, and His-195. The Mn(2+) site is built by His-195 and His-197.

Belongs to the LpxH family. It depends on Mn(2+) as a cofactor.

The protein resides in the cell inner membrane. The enzyme catalyses UDP-2-N,3-O-bis[(3R)-3-hydroxytetradecanoyl]-alpha-D-glucosamine + H2O = 2-N,3-O-bis[(3R)-3-hydroxytetradecanoyl]-alpha-D-glucosaminyl 1-phosphate + UMP + 2 H(+). It participates in glycolipid biosynthesis; lipid IV(A) biosynthesis; lipid IV(A) from (3R)-3-hydroxytetradecanoyl-[acyl-carrier-protein] and UDP-N-acetyl-alpha-D-glucosamine: step 4/6. Hydrolyzes the pyrophosphate bond of UDP-2,3-diacylglucosamine to yield 2,3-diacylglucosamine 1-phosphate (lipid X) and UMP by catalyzing the attack of water at the alpha-P atom. Involved in the biosynthesis of lipid A, a phosphorylated glycolipid that anchors the lipopolysaccharide to the outer membrane of the cell. In Salmonella paratyphi C (strain RKS4594), this protein is UDP-2,3-diacylglucosamine hydrolase.